Consider the following 395-residue polypeptide: Succinyl-diaminopimelate desuccinylase (395 aa).

Position 74 (histidine 74) interacts with Zn(2+). Residue aspartate 76 is part of the active site. Aspartate 107 provides a ligand contact to Zn(2+). Glutamate 141 functions as the Proton acceptor in the catalytic mechanism. Glutamate 142, glutamate 170, and histidine 368 together coordinate Zn(2+).

Belongs to the peptidase M20A family. DapE subfamily. As to quaternary structure, homodimer. Zn(2+) serves as cofactor. Co(2+) is required as a cofactor.

The catalysed reaction is N-succinyl-(2S,6S)-2,6-diaminopimelate + H2O = (2S,6S)-2,6-diaminopimelate + succinate. It functions in the pathway amino-acid biosynthesis; L-lysine biosynthesis via DAP pathway; LL-2,6-diaminopimelate from (S)-tetrahydrodipicolinate (succinylase route): step 3/3. Its function is as follows. Catalyzes the hydrolysis of N-succinyl-L,L-diaminopimelic acid (SDAP), forming succinate and LL-2,6-diaminopimelate (DAP), an intermediate involved in the bacterial biosynthesis of lysine and meso-diaminopimelic acid, an essential component of bacterial cell walls. The polypeptide is Succinyl-diaminopimelate desuccinylase (Brucella anthropi (strain ATCC 49188 / DSM 6882 / CCUG 24695 / JCM 21032 / LMG 3331 / NBRC 15819 / NCTC 12168 / Alc 37) (Ochrobactrum anthropi)).